The chain runs to 274 residues: MNRLEKRMSACRKAGRKALIPYITAGDPGPEHTVPLMHALVGAGADVLELGVPFSDPMADGPVIQAACERALAHGTTLRDVFDMVRRFREQDGETPVVLMGYLNPVEYLGPAVFAEEAAAAGVDGVLTVDLPPEEAAPFTQAFAANDLCPIFLVAPTTAGERLEAVCQAARGFVYYVAIKGVTGVAELDVDDIARRVSAVRARTDLPVGVGFGIRDAESAARVGAVADAVIVGSALVNRIAGLTEQPERVPAVLAEALGEMRRALDGLAEEVAS.

Catalysis depends on proton acceptor residues E49 and D60.

It belongs to the TrpA family. As to quaternary structure, tetramer of two alpha and two beta chains.

The enzyme catalyses (1S,2R)-1-C-(indol-3-yl)glycerol 3-phosphate + L-serine = D-glyceraldehyde 3-phosphate + L-tryptophan + H2O. The protein operates within amino-acid biosynthesis; L-tryptophan biosynthesis; L-tryptophan from chorismate: step 5/5. The alpha subunit is responsible for the aldol cleavage of indoleglycerol phosphate to indole and glyceraldehyde 3-phosphate. The chain is Tryptophan synthase alpha chain from Alkalilimnicola ehrlichii (strain ATCC BAA-1101 / DSM 17681 / MLHE-1).